We begin with the raw amino-acid sequence, 1084 residues long: Transcription elongation factor SPT5 (1084 aa).

The interval 1–91 (MSDSEDSDFS…DDEYEDEDPW (91 aa)) is disordered. Composition is skewed to acidic residues over residues 20–32 (AEEV…EEEQ), 41–62 (AEEE…EEDD), and 77–91 (DEAD…EDPW). The interaction with SUPT4H1 stretch occupies residues 175–269 (DPNLWTVKCK…TDVLKVVKEV (95 aa)). KOW domains lie at 272–305 (LKPK…ISLK), 419–450 (LQAG…ITIM), 471–502 (FRMG…VILF), and 593–626 (IHVK…LHCK). An interaction with RNA polymerase II region spans residues 312 to 419 (LDRIKARMSM…TTGKEREHNL (108 aa)). Serine 665 is modified (phosphoserine). The disordered stretch occupies residues 667-700 (RISSPMHPGGGGQPQRGGGGGGGGGMGRGRGRRD). A compositionally biased stretch (gly residues) spans 674 to 694 (PGGGGQPQRGGGGGGGGGMGR). Residues 702–735 (DLIGQTVRISQGPYKGYIGVVKDATESTARVELH) enclose the KOW 5 domain. A disordered region spans residues 748-973 (LTTVGGKERQ…HTPGSNIDQA (226 aa)). A CTR1-1; approximate repeat occupies 758 to 763 (GRSSTH). The segment at 758 to 815 (GRSSTHLRTPMYGSQTPIYGTGSRTPMYGSQTPLHDGSRTPHYGSQTPLHDGSRTPGQ) is 8 X 7 AA approximate tandem repeats of G-S-[QR]-T-P-X-[YQ], motif CTR1. Over residues 759 to 790 (RSSTHLRTPMYGSQTPIYGTGSRTPMYGSQTP) the composition is skewed to polar residues. One copy of the CTR1-2; approximate repeat lies at 764–769 (LRTPMY). The CTR1-3 repeat unit spans residues 770–776 (GSQTPIY). Residues threonine 773 and threonine 782 each carry the phosphothreonine; by CDK9 modification. The stretch at 779 to 785 (GSRTPMY) is one CTR1-4 repeat. The CTR1-5 repeat unit spans residues 786-792 (GSQTPLH). The CTR1-6 repeat unit spans residues 794–800 (GSRTPHY). The stretch at 801–807 (GSQTPLH) is one CTR1-7 repeat. A CTR1-8 repeat occupies 809–815 (GSRTPGQ). A compositionally biased stretch (acidic residues) spans 832-842 (DEYEFAYDDEP). The stretch at 842 to 849 (PSPSPQGY) is one CTR2-1 repeat. The tract at residues 842–948 (PSPSPQGYGG…ASPSPSPVGY (107 aa)) is 10 X 8 AA approximate tandem repeats of P-[TS]-P-S-P-[QA]-[SG]-Y, motif CTR2. The CTR2-2; approximate repeat unit spans residues 852–860 (TPNPQTPGY). The segment covering 855–864 (PQTPGYPEVP) has biased composition (pro residues). The stretch at 861-867 (PEVPSPQ) is one CTR2-3; approximate repeat. Positions 866 to 888 (PQVNPQYNPQTPGTPAMYNTDQY) are enriched in polar residues. The stretch at 879 to 883 (TPAMY) is one CTR2-4; half-length repeat. Residues 894–900 (PSPQGSY) form a CTR2-5; approximate repeat. Low complexity predominate over residues 894-909 (PSPQGSYQPSPSPQSY). One copy of the CTR2-6 repeat lies at 902–909 (PSPSPQSY). Residues 914–919 (PSPVGY) form a CTR2-7; approximate repeat. Residues 922–928 (THSPASY) form a CTR2-8 repeat. Residues 930-937 (PTPSPMAY) form a CTR2-9 repeat. One copy of the CTR2-10 repeat lies at 941 to 948 (PSPSPVGY).

Belongs to the SPT5 family. Interacts with SUPT4H1 to form the DSIF complex. DSIF interacts with RNA polymerase II and with the positive transcription elongation factor b complex (P-TEFb complex), which is composed of CDK9 and cyclin-T. Phosphorylated. Phosphorylation by P-TEFb (CDK9) at Thr residues of the C-terminal repeats alleviates transcriptional pausing and promotes transcription elongation.

The protein resides in the nucleus. Functionally, component of the DRB sensitivity-inducing factor complex (DSIF complex), which regulates mRNA processing and transcription elongation by RNA polymerase II. DSIF positively regulates mRNA capping by stimulating the mRNA guanylyltransferase activity of RNGTT/CAP1A. DSIF also acts cooperatively with the negative elongation factor complex (NELF complex) to enhance transcriptional pausing at sites proximal to the promoter. Transcriptional pausing may facilitate the assembly of an elongation competent RNA polymerase II complex. DSIF and NELF promote pausing by inhibition of the transcription elongation factor TFIIS/S-II. TFIIS/S-II binds to RNA polymerase II at transcription pause sites and stimulates the weak intrinsic nuclease activity of the enzyme. Cleavage of blocked transcripts by RNA polymerase II promotes the resumption of transcription from the new 3' terminus and may allow repeated attempts at transcription through natural pause sites. Following phosphorylation by CDK9, DSIF can also positively regulate transcriptional elongation. Regulation of transcriptional elongation by this protein is required for the expression of genes which control neuronal development. This chain is Transcription elongation factor SPT5 (supt5h), found in Danio rerio (Zebrafish).